We begin with the raw amino-acid sequence, 446 residues long: RUN domain-containing protein 3A (446 aa).

Residues 1 to 298 (MEASFVQTTM…LQLQLEEAAA (298 aa)) are interaction with RAP2A. Positions 52–189 (DDSSEEFVNF…IDFSFCLKGE (138 aa)) constitute an RUN domain. Threonine 215 carries the phosphothreonine modification. The tract at residues 216–239 (DEEERHSAESSTSEDNSPEHPYLP) is disordered. Serine 232 is modified (phosphoserine). Residues 267–322 (YLEELVRLRESQLKDLEAENRRLQLQLEEAAAQNQREKRELEGVILELQEQLTGLI) adopt a coiled-coil conformation. The segment covering 372 to 384 (PLSAEASLSSDSQ) has biased composition (polar residues). A disordered region spans residues 372-404 (PLSAEASLSSDSQRLGEGTRDEEPWGPIGKDPT). Phosphoserine is present on residues serine 416 and serine 419.

Belongs to the RUNDC3 family. As to quaternary structure, interacts with the GTP-bound form of RAP2A.

In terms of biological role, may act as an effector of RAP2A in neuronal cells. This Homo sapiens (Human) protein is RUN domain-containing protein 3A (RUNDC3A).